The primary structure comprises 81 residues: Large ribosomal subunit protein bL31 (81 aa).

This sequence belongs to the bacterial ribosomal protein bL31 family. Type A subfamily. Part of the 50S ribosomal subunit.

Binds the 23S rRNA. In Fusobacterium nucleatum subsp. nucleatum (strain ATCC 25586 / DSM 15643 / BCRC 10681 / CIP 101130 / JCM 8532 / KCTC 2640 / LMG 13131 / VPI 4355), this protein is Large ribosomal subunit protein bL31 (rpmE).